The sequence spans 184 residues: Probable RNA 2'-phosphotransferase (184 aa).

The protein belongs to the KptA/TPT1 family.

Removes the 2'-phosphate from RNA via an intermediate in which the phosphate is ADP-ribosylated by NAD followed by a presumed transesterification to release the RNA and generate ADP-ribose 1''-2''-cyclic phosphate (APPR&gt;P). May function as an ADP-ribosylase. The sequence is that of Probable RNA 2'-phosphotransferase from Escherichia coli (strain K12 / MC4100 / BW2952).